The following is a 722-amino-acid chain: Biotin--protein ligase (722 aa).

The interval 27 to 93 is disordered; the sequence is KELGKASDKQ…EPAADGDPGL (67 aa). The span at 46 to 55 shows a compositional bias: low complexity; the sequence is ASPEAQPAQG. Residue serine 295 is modified to Phosphoserine. Positions 459–648 constitute a BPL/LPL catalytic domain; that stretch reads TRLGKVILFA…VLEKLIDRFQ (190 aa).

The protein belongs to the biotin--protein ligase family. Monomer.

It localises to the cytoplasm. The protein localises to the mitochondrion. The catalysed reaction is apo-[methylmalonyl-CoA:pyruvate carboxytransferase] + biotin + ATP = holo-[methylmalonyl-CoA:pyruvate carboxytransferase] + AMP + diphosphate + H(+). The enzyme catalyses apo-[propionyl-CoA:carbon-dioxide ligase (ADP-forming)] + biotin + ATP = holo-[propionyl-CoA:carbon-dioxide ligase (ADP-forming)] + AMP + diphosphate + H(+). It catalyses the reaction apo-[3-methylcrotonoyl-CoA:carbon-dioxide ligase (ADP-forming)] + biotin + ATP = holo-[3-methylcrotonoyl-CoA:carbon-dioxide ligase (ADP-forming)] + AMP + diphosphate + H(+). It carries out the reaction biotin + L-lysyl-[protein] + ATP = N(6)-biotinyl-L-lysyl-[protein] + AMP + diphosphate + H(+). Biotin--protein ligase catalyzing the biotinylation of the 4 biotin-dependent carboxylases acetyl-CoA-carboxylase, pyruvate carboxylase, propionyl-CoA carboxylase, and methylcrotonyl-CoA carboxylase. The chain is Biotin--protein ligase from Mus musculus (Mouse).